The sequence spans 631 residues: NADPH oxidoreductase A (631 aa).

The Flavodoxin-like domain occupies 73–212 (ILILYGTEYG…CFDRYIDTVC (140 aa)). FMN-binding positions include 79–83 (TEYGL) and 160–191 (VLALGDRSYPHYCAAGKTLDKQFEEMGAKRFR). One can recognise an FAD-binding FR-type domain in the interval 247-480 (KKPYSSKLLV…INNNPDFRLP (234 aa)). 249–299 (PYSSKLLVKRVLTKGDKVGIHLEFELGDSELKYVPGDALAILPDNAASEVS) lines the FAD pocket. 504 to 630 (QERKALGHTG…KEKRYQKDVW (127 aa)) provides a ligand contact to NADP(+).

The cofactor is FAD. FMN serves as cofactor.

In terms of biological role, probable NADPH oxidoreductase that controls development beyond the mound stage. In Dictyostelium discoideum (Social amoeba), this protein is NADPH oxidoreductase A (redA).